The chain runs to 621 residues: ATP-dependent lipid A-core flippase (621 aa).

The next 5 membrane-spanning stretches (helical) occupy residues 32–52 (IVAALIAIFGVAATESYLAAF), 91–111 (VWGTENKIWTVPLFLIILVVI), 192–212 (IVLLYLNWQLSLIVVLMFPLL), 286–306 (SPFSELIASIALAVVIFIALW), and 312–332 (YTTIGEFMAFIVAMLQMYAPI). One can recognise an ABC transmembrane type-1 domain in the interval 33 to 344 (VAALIAIFGV…LANISIPMQT (312 aa)). Residues 378-611 (FRNVDVEYRS…NGYYTMLRNI (234 aa)) form the ABC transporter domain. Residue 410–417 (GRSGSGKS) participates in ATP binding.

The protein belongs to the ABC transporter superfamily. Lipid exporter (TC 3.A.1.106) family. Homodimer.

The protein localises to the cell inner membrane. It carries out the reaction ATP + H2O + lipid A-core oligosaccharideSide 1 = ADP + phosphate + lipid A-core oligosaccharideSide 2.. Functionally, involved in lipopolysaccharide (LPS) biosynthesis. Translocates lipid A-core from the inner to the outer leaflet of the inner membrane. Transmembrane domains (TMD) form a pore in the inner membrane and the ATP-binding domain (NBD) is responsible for energy generation. This is ATP-dependent lipid A-core flippase from Neisseria meningitidis serogroup A / serotype 4A (strain DSM 15465 / Z2491).